A 194-amino-acid chain; its full sequence is tRNA (mnm(5)s(2)U34)-methyltransferase (194 aa).

Residues histidine 33, aspartate 34, aspartate 52, glutamine 54, serine 79, and histidine 80 each contribute to the S-adenosyl-L-methionine site.

It belongs to the methyltransferase superfamily. MnmM family. Homodimer.

The enzyme catalyses 5-aminomethyl-2-thiouridine(34) in tRNA + S-adenosyl-L-methionine = 5-methylaminomethyl-2-thiouridine(34) in tRNA + S-adenosyl-L-homocysteine + H(+). Its pathway is tRNA modification. Its function is as follows. Involved in the biosynthesis of 5-methylaminomethyl-2-thiouridine (mnm(5)s(2)U) at the wobble position (U34) in tRNA. Catalyzes the transfer of a methyl group from S-adenosyl-L-methionine to nm(5)s(2)U34 to form mnm(5)s(2)U34. The sequence is that of tRNA (mnm(5)s(2)U34)-methyltransferase from Bacillus subtilis (strain 168).